A 406-amino-acid chain; its full sequence is Vacuole membrane protein 1 (406 aa).

The residue at position 2 (A2) is an N-acetylalanine. The Cytoplasmic segment spans residues 2–43 (AENGQNCDQRRVAMNKEQYNGNFTDPSSVNEKKRRDREERQN). The chain crosses the membrane as a helical span at residues 44 to 63 (IVLWRQPLITLQYFSLETLV). Over 64 to 77 (ILKEWTSKLWHRQS) the chain is Extracellular. A helical membrane pass occupies residues 78–98 (IVVSFLLLLAVLTATYYVEGA). The Cytoplasmic segment spans residues 99–109 (HQQYVQRIEKQ). Residues 110–130 (FLLYAYWIGLGILSSVGLGTG) form a helical membrane-spanning segment. The Extracellular segment spans residues 131-250 (LHTFLLYLGP…ASRAKLAVQN (120 aa)). The segment at 173-316 (GTEGTISLWS…FVIVAFSKHI (144 aa)) is VTT domain. A helical membrane pass occupies residues 251 to 271 (LVQKVGFFGILACASIPNPLF). The Cytoplasmic portion of the chain corresponds to 272 to 273 (DL). The chain crosses the membrane as a helical span at residues 274–294 (AGITCGHFLVPFWTFFGATLI). Topologically, residues 295–306 (GKAIIKMHIQKL) are extracellular. The chain crosses the membrane as a helical span at residues 307 to 327 (FVIVAFSKHIVEQMVAFIGAV). The Cytoplasmic portion of the chain corresponds to 328–363 (PGIGPSLQKPFQEYLEAQRQKLHHRSEMGTPQGENW). Residues 364-384 (LSWMFEKLVVVMVCYFILSII) traverse the membrane as a helical segment. At 385–406 (NSMAQSYAKRIQQRLDPKEKTK) the chain is on the extracellular side.

The protein belongs to the VMP1 family. As to quaternary structure, interacts with BECN1. Interacts with TJP1. Interacts with TP53INP2. Interacts with TMEM41B. Interacts with ATP2A2, PLN and SLN; competes with PLN and SLN to prevent them from forming an inhibitory complex with ATP2A2. Interacts with ATG2A.

Its subcellular location is the endoplasmic reticulum-Golgi intermediate compartment membrane. The protein localises to the cell membrane. The protein resides in the vacuole membrane. It is found in the endoplasmic reticulum membrane. It catalyses the reaction a 1,2-diacyl-sn-glycero-3-phospho-L-serine(in) = a 1,2-diacyl-sn-glycero-3-phospho-L-serine(out). The enzyme catalyses cholesterol(in) = cholesterol(out). It carries out the reaction a 1,2-diacyl-sn-glycero-3-phosphocholine(in) = a 1,2-diacyl-sn-glycero-3-phosphocholine(out). The catalysed reaction is a 1,2-diacyl-sn-glycero-3-phosphoethanolamine(in) = a 1,2-diacyl-sn-glycero-3-phosphoethanolamine(out). Phospholipid scramblase involved in lipid homeostasis and membrane dynamics processes. Has phospholipid scramblase activity toward cholesterol and phosphatidylserine, as well as phosphatidylethanolamine and phosphatidylcholine. Required for autophagosome formation: participates in early stages of autophagosome biogenesis at the endoplasmic reticulum (ER) membrane by reequilibrating the leaflets of the ER as lipids are extracted by ATG2 (ATG2A or ATG2B) to mediate autophagosome assembly. Regulates ATP2A2 activity to control ER-isolation membrane contacts for autophagosome formation. In addition to autophagy, involved in other processes in which phospholipid scramblase activity is required. Modulates ER contacts with lipid droplets, mitochondria and endosomes. Plays an essential role in formation of cell junctions. Upon stress such as bacterial and viral infection, promotes formation of cytoplasmic vacuoles followed by cell death. Involved in the cytoplasmic vacuolization of acinar cells during the early stage of acute pancreatitis. In Bos taurus (Bovine), this protein is Vacuole membrane protein 1.